The chain runs to 88 residues: Toxin RelE2 (88 aa).

Belongs to the RelE toxin family.

Functionally, toxic component of a type II toxin-antitoxin (TA) system. Its toxic effect is neutralized by coexpression with cognate antitoxin RelB2 but no other ParD or RelB antitoxin. This Caulobacter vibrioides (strain ATCC 19089 / CIP 103742 / CB 15) (Caulobacter crescentus) protein is Toxin RelE2 (relE2).